The primary structure comprises 562 residues: Scaffold protein FimL (562 aa).

Interacts with PilG and FimV.

The protein localises to the cytoplasm. Regulates multiple virulence functions including type IV pilus (T4P)-mediated assembly and twitching motility as well as cAMP-dependent virulence gene expression. Regulates intracellular cyclic AMP (cAMP) levels through the activation of adenylate cyclase CyaB. Also functions as a scaffold linking FimV and PilG at the pole, where type IV pilus (T4P), the Chp chemosensory system and the CyaB adenylate cyclase interact. The sequence is that of Scaffold protein FimL (fimL) from Pseudomonas aeruginosa (strain ATCC 15692 / DSM 22644 / CIP 104116 / JCM 14847 / LMG 12228 / 1C / PRS 101 / PAO1).